Here is a 428-residue protein sequence, read N- to C-terminus: Glucose-1-phosphate adenylyltransferase (428 aa).

Residues tyrosine 114, glycine 179, 194 to 195, and serine 212 contribute to the alpha-D-glucose 1-phosphate site; that span reads EK.

Belongs to the bacterial/plant glucose-1-phosphate adenylyltransferase family. Homotetramer.

The catalysed reaction is alpha-D-glucose 1-phosphate + ATP + H(+) = ADP-alpha-D-glucose + diphosphate. The protein operates within glycan biosynthesis; glycogen biosynthesis. In terms of biological role, involved in the biosynthesis of ADP-glucose, a building block required for the elongation reactions to produce glycogen. Catalyzes the reaction between ATP and alpha-D-glucose 1-phosphate (G1P) to produce pyrophosphate and ADP-Glc. The polypeptide is Glucose-1-phosphate adenylyltransferase (Yersinia pseudotuberculosis serotype IB (strain PB1/+)).